We begin with the raw amino-acid sequence, 219 residues long: N-(5'-phosphoribosyl)anthranilate isomerase (219 aa).

It belongs to the TrpF family.

It carries out the reaction N-(5-phospho-beta-D-ribosyl)anthranilate = 1-(2-carboxyphenylamino)-1-deoxy-D-ribulose 5-phosphate. It participates in amino-acid biosynthesis; L-tryptophan biosynthesis; L-tryptophan from chorismate: step 3/5. In Bordetella avium (strain 197N), this protein is N-(5'-phosphoribosyl)anthranilate isomerase.